A 157-amino-acid chain; its full sequence is Large ribosomal subunit protein eL24 (157 aa).

Residues 94–157 (RNQKPEVRKA…ISAPRVGGKR (64 aa)) are disordered. Over residues 96–117 (QKPEVRKAQREQAIRAAKESKK) the composition is skewed to basic and acidic residues. Low complexity predominate over residues 123-140 (KKPAAASAKTSAKTAQKP).

Belongs to the eukaryotic ribosomal protein eL24 family. As to quaternary structure, component of the large ribosomal subunit.

The protein localises to the cytoplasm. Component of the large ribosomal subunit. The ribosome is a large ribonucleoprotein complex responsible for the synthesis of proteins in the cell. This is Large ribosomal subunit protein eL24 (rpl24) from Gillichthys mirabilis (Long-jawed mudsucker).